A 209-amino-acid polypeptide reads, in one-letter code: Ribosomal RNA small subunit methyltransferase G (209 aa).

Residues Gly-74, Phe-79, and Arg-139 each coordinate S-adenosyl-L-methionine.

The protein belongs to the methyltransferase superfamily. RNA methyltransferase RsmG family.

It is found in the cytoplasm. The enzyme catalyses guanosine(527) in 16S rRNA + S-adenosyl-L-methionine = N(7)-methylguanosine(527) in 16S rRNA + S-adenosyl-L-homocysteine. In terms of biological role, specifically methylates the N7 position of guanine in position 527 of 16S rRNA. This is Ribosomal RNA small subunit methyltransferase G from Halorhodospira halophila (strain DSM 244 / SL1) (Ectothiorhodospira halophila (strain DSM 244 / SL1)).